Reading from the N-terminus, the 345-residue chain is Phosphoribosylformylglycinamidine cyclo-ligase (345 aa).

The protein belongs to the AIR synthase family.

The protein resides in the cytoplasm. It catalyses the reaction 2-formamido-N(1)-(5-O-phospho-beta-D-ribosyl)acetamidine + ATP = 5-amino-1-(5-phospho-beta-D-ribosyl)imidazole + ADP + phosphate + H(+). It participates in purine metabolism; IMP biosynthesis via de novo pathway; 5-amino-1-(5-phospho-D-ribosyl)imidazole from N(2)-formyl-N(1)-(5-phospho-D-ribosyl)glycinamide: step 2/2. In Chromobacterium violaceum (strain ATCC 12472 / DSM 30191 / JCM 1249 / CCUG 213 / NBRC 12614 / NCIMB 9131 / NCTC 9757 / MK), this protein is Phosphoribosylformylglycinamidine cyclo-ligase.